The chain runs to 529 residues: GMP synthase [glutamine-hydrolyzing] (529 aa).

In terms of domain architecture, Glutamine amidotransferase type-1 spans 9-211; that stretch reads RILILDFGSQ…VKDICGCECL (203 aa). The active-site Nucleophile is the Cys86. Catalysis depends on residues His185 and Glu187. The GMPS ATP-PPase domain maps to 212-404; that stretch reads WTPATIIDDA…LGLPYDMLYR (193 aa). 239-245 is a binding site for ATP; it reads SGGVDSS.

In terms of assembly, homodimer.

It carries out the reaction XMP + L-glutamine + ATP + H2O = GMP + L-glutamate + AMP + diphosphate + 2 H(+). The protein operates within purine metabolism; GMP biosynthesis; GMP from XMP (L-Gln route): step 1/1. In terms of biological role, catalyzes the synthesis of GMP from XMP. This chain is GMP synthase [glutamine-hydrolyzing], found in Aeromonas hydrophila subsp. hydrophila (strain ATCC 7966 / DSM 30187 / BCRC 13018 / CCUG 14551 / JCM 1027 / KCTC 2358 / NCIMB 9240 / NCTC 8049).